The sequence spans 86 residues: Weak neurotoxin 6 (86 aa).

Residues 1–21 (MKTLLLTLVVVTIVCLDLGYT) form the signal peptide. Intrachain disulfides connect cysteine 24–cysteine 45, cysteine 27–cysteine 32, cysteine 38–cysteine 63, cysteine 67–cysteine 78, and cysteine 79–cysteine 84.

It belongs to the three-finger toxin family. Ancestral subfamily. Orphan group II sub-subfamily. In terms of tissue distribution, expressed by the venom gland.

Its subcellular location is the secreted. Functionally, binds with low affinity to muscular (alpha-1-beta-1-delta-epsilon/CHRNA1-CHRNB1-CHRND-CHRNE) and very low affinity to neuronal (alpha-7/CHRNA7) nicotinic acetylcholine receptor (nAChR). The protein is Weak neurotoxin 6 of Naja sputatrix (Malayan spitting cobra).